The sequence spans 544 residues: Probable protein kinase UbiB (544 aa).

The region spanning 123–501 is the Protein kinase domain; the sequence is EFDIKPLASA…KRQQATGKFL (379 aa). ATP is bound by residues 129–137 and lysine 152; that span reads LASASIAQV. The Proton acceptor role is filled by aspartate 287. 2 consecutive transmembrane segments (helical) span residues 496-516 and 519-539; these read ATGK…AILV and AYEQ…LLSW.

Belongs to the ABC1 family. UbiB subfamily.

It localises to the cell inner membrane. It participates in cofactor biosynthesis; ubiquinone biosynthesis [regulation]. In terms of biological role, is probably a protein kinase regulator of UbiI activity which is involved in aerobic coenzyme Q (ubiquinone) biosynthesis. This is Probable protein kinase UbiB from Vibrio parahaemolyticus serotype O3:K6 (strain RIMD 2210633).